The chain runs to 421 residues: Mitochondrial tRNA-specific 2-thiouridylase 1 (421 aa).

ATP is bound by residues 10–17 (ALSGGVDS) and M36. Positions 96–98 (NPD) are interaction with target base in tRNA. C101 (nucleophile) is an active-site residue. C101 and C222 are joined by a disulfide. G126 is an ATP binding site. The interaction with tRNA stretch occupies residues 171 to 173 (KDQ). C222 functions as the Cysteine persulfide intermediate in the catalytic mechanism. An interaction with tRNA region spans residues 334 to 335 (RH). Residues 395–421 (KGQRRAGMATESPSDSPEDGPGLSPLL) are disordered.

Belongs to the MnmA/TRMU family. Ubiquitous. Abundantly expressed in tissues with high metabolic rates including heart, liver, kidney, and brain.

It is found in the mitochondrion. The enzyme catalyses 5-taurinomethyluridine(34) in tRNA + S-sulfanyl-L-cysteinyl-[protein] + AH2 + ATP = 5-taurinomethyl-2-thiouridine(34) in tRNA + L-cysteinyl-[protein] + A + AMP + diphosphate + H(+). Its function is as follows. Catalyzes the 2-thiolation of uridine at the wobble position (U34) of mitochondrial tRNA(Lys), tRNA(Glu) and tRNA(Gln). Required for the formation of 5-taurinomethyl-2-thiouridine (tm5s2U) of mitochondrial tRNA(Lys), tRNA(Glu), and tRNA(Gln) at the wobble position. ATP is required to activate the C2 atom of the wobble base. The chain is Mitochondrial tRNA-specific 2-thiouridylase 1 (TRMU) from Homo sapiens (Human).